The chain runs to 524 residues: Na(+)/H(+) antiporter NhaG (524 aa).

The next 11 helical transmembrane spans lie at 6–26 (LHHI…ITAI), 33–53 (PYPI…IPLF), 59–79 (FITE…PALL), 98–118 (VLAL…SSMW), 126–146 (AAFV…LSIF), 169–189 (LAVV…DLGI), 193–213 (GLGL…GGVL), 242–262 (FLLA…AALI), 283–303 (FWDV…GLEI), 312–332 (WGLA…AVYI), and 374–394 (DILV…GLTI).

Belongs to the monovalent cation:proton antiporter 1 (CPA1) transporter (TC 2.A.36) family.

The protein localises to the cell membrane. Functionally, na(+)/H(+) antiporter that extrudes sodium in exchange for external protons. Can also transport lithium. The sequence is that of Na(+)/H(+) antiporter NhaG (nhaG) from Bacillus atrophaeus.